We begin with the raw amino-acid sequence, 482 residues long: Type II methyltransferase M.AvaI (482 aa).

The protein belongs to the N(4)/N(6)-methyltransferase family. N(4) subfamily.

It carries out the reaction a 2'-deoxycytidine in DNA + S-adenosyl-L-methionine = an N(4)-methyl-2'-deoxycytidine in DNA + S-adenosyl-L-homocysteine + H(+). Its function is as follows. An alpha subtype methylase that recognizes the double-stranded sequence 5'-CYCGRG-3', methylates C-1 on both strands, and protects the DNA from cleavage by the AvaI endonuclease. The protein is Type II methyltransferase M.AvaI of Anabaena variabilis.